The following is a 186-amino-acid chain: MSAEFDLADIKRRMQGAIATLKHELGGLRTGRASASLIEPVNVEAYGQTMPLNQVATISVPEPRMLSVQVWDKGMVGAVDKAIRNANLGLSPTVEGQVLRIRIPELNEQRRKEMAKVAHKYAEDARVAIRHVRRDGIDVLKRLLKDKEISEDDEKRHESEVQKATDQCVADVDSALVAKEREIMQV.

It belongs to the RRF family.

The protein resides in the cytoplasm. Functionally, responsible for the release of ribosomes from messenger RNA at the termination of protein biosynthesis. May increase the efficiency of translation by recycling ribosomes from one round of translation to another. The sequence is that of Ribosome-recycling factor from Methylocella silvestris (strain DSM 15510 / CIP 108128 / LMG 27833 / NCIMB 13906 / BL2).